The sequence spans 156 residues: Small ribosomal subunit protein uS7 (156 aa).

The protein belongs to the universal ribosomal protein uS7 family. Part of the 30S ribosomal subunit. Contacts proteins S9 and S11.

Its function is as follows. One of the primary rRNA binding proteins, it binds directly to 16S rRNA where it nucleates assembly of the head domain of the 30S subunit. Is located at the subunit interface close to the decoding center, probably blocks exit of the E-site tRNA. The sequence is that of Small ribosomal subunit protein uS7 from Prochlorococcus marinus (strain MIT 9211).